Here is a 407-residue protein sequence, read N- to C-terminus: Homeobox even-skipped homolog protein 1 (407 aa).

Disordered stretches follow at residues 29–120 and 137–179; these read EAVG…SDFY and EYQH…ACSA. Over residues 102–114 the composition is skewed to polar residues; it reads DSLSGQGQPSSSD. Residues 183–242 constitute a DNA-binding region (homeobox); it reads MRRYRTAFTREQIARLEKEFYRENYVSRPRRCELAAALNLPETTIKVWFQNRRMKDKRQR.

This sequence belongs to the even-skipped homeobox family.

It localises to the nucleus. May play a role in the specification of neuronal cell types. This Homo sapiens (Human) protein is Homeobox even-skipped homolog protein 1 (EVX1).